Here is a 314-residue protein sequence, read N- to C-terminus: E3 ubiquitin-protein ligase SINA-like 11 (314 aa).

The span at 1–12 (MEDSNSHPQNQT) shows a compositional bias: polar residues. Residues 1–31 (MEDSNSHPQNQTSKRKSSHPQKKQRMENETR) are disordered. Residues 13–23 (SKRKSSHPQKK) are compositionally biased toward basic residues. The RING-type; degenerate zinc finger occupies 43–81 (CPVCFEPLTIPTFQCDDGHIVCNFCFAKVSNKCPGPGCD). The SBD stretch occupies residues 95-280 (VLESAFVPCQ…PANEVQQVTI (186 aa)). Residues 98-156 (SAFVPCQNTEFGCTKSVSYEKVSSHEKECNYSQCSCPNLECNYTGSYNIIYGHFMRRHL) form an SIAH-type zinc finger. The Zn(2+) site is built by Cys-103, Cys-110, His-122, Cys-126, Cys-133, Cys-138, His-150, and His-155.

This sequence belongs to the SINA (Seven in absentia) family.

It carries out the reaction S-ubiquitinyl-[E2 ubiquitin-conjugating enzyme]-L-cysteine + [acceptor protein]-L-lysine = [E2 ubiquitin-conjugating enzyme]-L-cysteine + N(6)-ubiquitinyl-[acceptor protein]-L-lysine.. It functions in the pathway protein modification; protein ubiquitination. Its function is as follows. E3 ubiquitin-protein ligase that mediates ubiquitination and subsequent proteasomal degradation of target proteins. E3 ubiquitin ligases accept ubiquitin from an E2 ubiquitin-conjugating enzyme in the form of a thioester and then directly transfers the ubiquitin to targeted substrates. It probably triggers the ubiquitin-mediated degradation of different substrates. This Arabidopsis thaliana (Mouse-ear cress) protein is E3 ubiquitin-protein ligase SINA-like 11.